We begin with the raw amino-acid sequence, 430 residues long: MSSVVVVGTQWGDEGKGKITDFLSENAEAIARYQGGNNAGHTIKFDGVTYKLHLIPSGIFYKEKISVIGNGMVVDPKALVEELKYLHDKGVDTSNLRISNRAHIILPYHIRIDEADEERKGANKIGTTKKGIGPAYMDKAARVGIRIIDLLDKETFKEKLEHNLGEKNRLLERFYELEGFKLEDILEEYYDYGQQFKEYVCDTSVVLNDALDDGKRVLFEGAQGVMLDIDQGTYPFVTSSNPIAGGVTIGSGVGPSKINHVVGVAKAYTTRVGDGPFPTELFDSIGDTIREVGHEYGTTTGRPRRVGWFDSVVVRHARRVSGLTDLSLTLLDVLTGIETLKICVAYKLDGKTITEFPASLKDLARCEPVYEELPGWTEDITGVTSLDDLPVNCRHYMERIAQLTGVQVSMFSVGPDRAQTHVIKSVWRLA.

GTP-binding positions include 12-18 and 40-42; these read GDEGKGK and GHT. D13 (proton acceptor) is an active-site residue. 2 residues coordinate Mg(2+): D13 and G40. Residues 13–16, 38–41, T128, R142, Q223, T238, and R302 contribute to the IMP site; these read DEGK and NAGH. The active-site Proton donor is H41. Residue 298 to 304 coordinates substrate; sequence TTTGRPR. GTP contacts are provided by residues R304, 330-332, and 412-414; these read LLD and SVG.

It belongs to the adenylosuccinate synthetase family. In terms of assembly, homodimer. Requires Mg(2+) as cofactor.

The protein resides in the cytoplasm. The catalysed reaction is IMP + L-aspartate + GTP = N(6)-(1,2-dicarboxyethyl)-AMP + GDP + phosphate + 2 H(+). It participates in purine metabolism; AMP biosynthesis via de novo pathway; AMP from IMP: step 1/2. Functionally, plays an important role in the de novo pathway of purine nucleotide biosynthesis. Catalyzes the first committed step in the biosynthesis of AMP from IMP. The polypeptide is Adenylosuccinate synthetase (Listeria monocytogenes serotype 4a (strain HCC23)).